Consider the following 97-residue polypeptide: Na(+)/H(+) antiporter subunit F1 (97 aa).

3 consecutive transmembrane segments (helical) span residues 3–23 (FKIFIITALIIVVLSMLAMLI), 35–55 (VVALDAIGLQLMAVIALFSIL), and 60–80 (YMLVVILMVGILAFLGTAVFS).

The protein belongs to the CPA3 antiporters (TC 2.A.63) subunit F family. In terms of assembly, may form a heterooligomeric complex that consists of seven subunits: mnhA1, mnhB1, mnhC1, mnhD1, mnhE1, mnhF1 and mnhG1.

Its subcellular location is the cell membrane. Functionally, mnh complex is a Na(+)/H(+) antiporter involved in Na(+) excretion. This Staphylococcus epidermidis (strain ATCC 35984 / DSM 28319 / BCRC 17069 / CCUG 31568 / BM 3577 / RP62A) protein is Na(+)/H(+) antiporter subunit F1 (mnhF1).